The chain runs to 574 residues: Alpha-mannosidase I MNS5 (574 aa).

Residues 1-9 (MSCPIHPRR) are Cytoplasmic-facing. A helical; Signal-anchor for type II membrane protein membrane pass occupies residues 10–26 (LFLCLLISLTFFVVDPS). The Lumenal segment spans residues 27–574 (SQHIEVKKKQ…VGYCGLWNPL (548 aa)). N-linked (GlcNAc...) asparagine glycans are attached at residues N89, N107, and N121. Catalysis depends on E134, which acts as the Proton donor. N201 carries N-linked (GlcNAc...) asparagine glycosylation. D274 is an active-site residue. N349 is a glycosylation site (N-linked (GlcNAc...) asparagine). Residue E367 is the Proton donor of the active site. E388 is a catalytic residue. A Ca(2+)-binding site is contributed by T471. The N-linked (GlcNAc...) asparagine glycan is linked to N494.

The protein belongs to the glycosyl hydrolase 47 family. Requires Ca(2+) as cofactor.

Its subcellular location is the endoplasmic reticulum membrane. The protein operates within protein modification; protein glycosylation. In terms of biological role, can convert Man(9)GlcNAc(2) and Man(8)GlcNAc(2) into N-glycans with a terminal alpha-1,6-linked Man residue in the C-branch. Functions in the formation of unique N-glycan structures that are specifically recognized by components of the endoplasmic reticulum-associated degradation (ERAD) machinery, which leads to the degradation of misfolded glycoproteins. Most likely generates N-glycan signal on misfolded glycoproteins that is subsequently recognized by OS9. Required for ERAD of the heavily glycosylated and misfolded BRI1 variants BRI1-5 and BRI1-9. Does not seem to play role in N-glycan processing of correctly folded proteins destined for secretion. In Arabidopsis thaliana (Mouse-ear cress), this protein is Alpha-mannosidase I MNS5 (MNS5).